We begin with the raw amino-acid sequence, 583 residues long: Protein NRT1/ PTR FAMILY 5.1 (583 aa).

Residues 74 to 94 traverse the membrane as a helical segment; the sequence is WSGAVWITPIAGAYIADSYIG. A Phosphothreonine modification is found at Thr98. Transmembrane regions (helical) follow at residues 99–119, 134–154, 182–202, 210–230, 320–340, 361–381, 405–425, 446–466, 485–505, and 529–549; these read FTAS…AVTV, ASSL…IGAG, FFNW…LGLV, WGLG…VFYI, VLGL…WAQV, IPAA…VPMY, LGVG…VEVK, IFWL…NAIG, TFFT…VTMI, and YYYG…VWAA.

The protein belongs to the major facilitator superfamily. Proton-dependent oligopeptide transporter (POT/PTR) (TC 2.A.17) family. As to expression, expressed in flowers. Detected in stems, leaves and siliques.

The protein resides in the membrane. This chain is Protein NRT1/ PTR FAMILY 5.1 (NPF5.1), found in Arabidopsis thaliana (Mouse-ear cress).